The following is a 672-amino-acid chain: 2,4-dienoyl-CoA reductase [(2E)-enoyl-CoA-producing] (672 aa).

FMN contacts are provided by residues 25 to 27, G59, and Q101; that span reads SMH. Y167 functions as the Proton donor in the catalytic mechanism. Residue R176 coordinates substrate. R215 is a binding site for FMN. 253–256 lines the substrate pocket; that stretch reads HEAR. FMN is bound by residues R289 and 311–312; that span reads AR. The [4Fe-4S] cluster site is built by C335 and C338. Q340 serves as a coordination point for FAD. NADP(+) is bound at residue Q340. Positions 342 and 354 each coordinate [4Fe-4S] cluster. Residues A385, D404, Q412, K422, and V449 each coordinate FAD. 563 to 564 provides a ligand contact to NADP(+); that stretch reads RK. Substrate is bound by residues K567 and W578. Residues G649 and 656–658 each bind FAD; that span reads LDA. Residue 654–656 coordinates NADP(+); sequence MEL.

This sequence in the N-terminal section; belongs to the NADH:flavin oxidoreductase/NADH oxidase family. In terms of assembly, monomer. FMN serves as cofactor. The cofactor is FAD. Requires [4Fe-4S] cluster as cofactor.

It carries out the reaction a 4,5-saturated-(2E)-enoyl-CoA + NADP(+) = a (2E,4E)-dienoyl-CoA + NADPH + H(+). It catalyses the reaction a (2E,4Z)-dienoyl-CoA + NADPH + H(+) = a 4,5-saturated-(2E)-enoyl-CoA + NADP(+). The enzyme catalyses (2E)-decenoyl-CoA + NADP(+) = (2E,4E)-decadienoyl-CoA + NADPH + H(+). The catalysed reaction is (2E)-decenoyl-CoA + NADP(+) = (2E,4Z)-decadienoyl-CoA + NADPH + H(+). The protein operates within lipid metabolism; fatty acid beta-oxidation. Its activity is regulated as follows. Is non-competitively inhibited by NADH. Functionally, functions as an auxiliary enzyme in the beta-oxidation of unsaturated fatty acids with double bonds at even carbon positions. Catalyzes the NADPH-dependent reduction of the C4-C5 double bond of the acyl chain of 2,4-dienoyl-CoA to yield 2-trans-enoyl-CoA. Acts on both isomers, 2-trans,4-cis- and 2-trans,4-trans-decadienoyl-CoA, with almost equal efficiency. Is not active with NADH instead of NADPH. Does not show cis-&gt;trans isomerase activity. The sequence is that of 2,4-dienoyl-CoA reductase [(2E)-enoyl-CoA-producing] from Escherichia coli (strain K12).